A 680-amino-acid polypeptide reads, in one-letter code: Leucine-rich repeat and calponin homology domain-containing protein 4 (680 aa).

Over residues 1–22 (MAAAVAGPLAAGGEEAAASVSL) the composition is skewed to low complexity. Residues 1–35 (MAAAVAGPLAAGGEEAAASVSLPGSPGLPGSRSAE) form a disordered region. LRR repeat units lie at residues 41–64 (AVAT…AARS), 67–90 (LSDI…ACQL), 92–113 (SLEG…LGNL), 114–136 (TALT…ICQL), 138–158 (LRVL…ISTL), 159–181 (GSLR…LCSL), 182–204 (RSLR…LGDL), 206–226 (LVRL…FCRL), and 227–250 (RHLQ…CLKG). Phosphoserine occurs at positions 279, 281, 304, 307, 309, and 313. The interval 329–528 (SELARDPRGP…PSSPESVLRP (200 aa)) is disordered. Positions 330 to 345 (ELARDPRGPRQPREDG) are enriched in basic and acidic residues. Acidic residues predominate over residues 346-355 (AGDGDLEQID). 2 stretches are compositionally biased toward basic and acidic residues: residues 357–371 (IDSH…RSAA) and 385–418 (DVEK…ERKQ). Ser432 bears the Phosphoserine mark. 2 stretches are compositionally biased toward low complexity: residues 440 to 453 (AAGA…TQAT) and 510 to 528 (RSSS…VLRP). Phosphoserine is present on residues Ser511, Ser513, Ser517, Ser521, and Ser586. The 114-residue stretch at 531–644 (FPQEKELISQ…VLEAVILVGG (114 aa)) folds into the Calponin-homology (CH) domain. The helical transmembrane segment at 655 to 675 (GLGGFLLFYVVFMLLLYVVYT) threads the bilayer.

Widely expressed across tissues, with the most abundant expression in spleen, testes, thymus, intestine, and blood. Expressed in macrophages.

It is found in the cell membrane. Its function is as follows. Accessory protein that regulates signaling by multiple TLRs, acting as a broad-spanning regulator of the innate immune response. In macrophages, binds LPS and promotes proper docking of LPS in lipid raft membrane. May be required for lipid raft maintenance. This chain is Leucine-rich repeat and calponin homology domain-containing protein 4 (Lrch4), found in Mus musculus (Mouse).